A 309-amino-acid polypeptide reads, in one-letter code: Transcription initiation factor IIB 1 (309 aa).

Tandem repeats lie at residues 125–208 and 219–300.

It belongs to the TFIIB family.

Functionally, stabilizes TBP binding to an archaeal box-A promoter. Also responsible for recruiting RNA polymerase II to the pre-initiation complex (DNA-TBP-TFIIB). The sequence is that of Transcription initiation factor IIB 1 from Saccharolobus solfataricus (strain ATCC 35092 / DSM 1617 / JCM 11322 / P2) (Sulfolobus solfataricus).